The sequence spans 110 residues: Ribonuclease (110 aa).

The active-site Proton acceptor is the Glu-73. The active-site Proton donor is His-102.

It belongs to the ribonuclease N1/T1 family.

The protein resides in the secreted. Hydrolyzes phosphodiester bonds in RNA, poly- and oligoribonucleotides resulting in 3'-nucleoside monophosphates via 2',3'-cyclophosphate intermediates. This Niallia circulans (Bacillus circulans) protein is Ribonuclease.